The following is a 78-amino-acid chain: Acyl carrier protein (78 aa).

The region spanning 2–77 (SDIAERVKKI…DAIKYIGENM (76 aa)) is the Carrier domain. Serine 37 carries the post-translational modification O-(pantetheine 4'-phosphoryl)serine.

It belongs to the acyl carrier protein (ACP) family. Post-translationally, 4'-phosphopantetheine is transferred from CoA to a specific serine of apo-ACP by AcpS. This modification is essential for activity because fatty acids are bound in thioester linkage to the sulfhydryl of the prosthetic group.

It localises to the cytoplasm. The protein operates within lipid metabolism; fatty acid biosynthesis. Carrier of the growing fatty acid chain in fatty acid biosynthesis. The chain is Acyl carrier protein from Magnetococcus marinus (strain ATCC BAA-1437 / JCM 17883 / MC-1).